The chain runs to 292 residues: Beta-lactamase-like protein 2 homolog (292 aa).

His76, His78, Asp80, His81, His145, Asp163, and His198 together coordinate Zn(2+).

It belongs to the metallo-beta-lactamase superfamily. Glyoxalase II family.

The polypeptide is Beta-lactamase-like protein 2 homolog (Drosophila melanogaster (Fruit fly)).